Reading from the N-terminus, the 283-residue chain is Bifunctional protein FolD (283 aa).

NADP(+) contacts are provided by residues 165-167 (GAS) and Ser-190.

It belongs to the tetrahydrofolate dehydrogenase/cyclohydrolase family. As to quaternary structure, homodimer.

The enzyme catalyses (6R)-5,10-methylene-5,6,7,8-tetrahydrofolate + NADP(+) = (6R)-5,10-methenyltetrahydrofolate + NADPH. The catalysed reaction is (6R)-5,10-methenyltetrahydrofolate + H2O = (6R)-10-formyltetrahydrofolate + H(+). It functions in the pathway one-carbon metabolism; tetrahydrofolate interconversion. Its function is as follows. Catalyzes the oxidation of 5,10-methylenetetrahydrofolate to 5,10-methenyltetrahydrofolate and then the hydrolysis of 5,10-methenyltetrahydrofolate to 10-formyltetrahydrofolate. This is Bifunctional protein FolD from Cupriavidus taiwanensis (strain DSM 17343 / BCRC 17206 / CCUG 44338 / CIP 107171 / LMG 19424 / R1) (Ralstonia taiwanensis (strain LMG 19424)).